The chain runs to 312 residues: Small ribosomal subunit protein uS2 (312 aa).

The disordered stretch occupies residues 232–312 (RASGAAERDE…AAPEGEAAAE (81 aa)). Basic and acidic residues predominate over residues 245-284 (REGRDDRGDRRDDRRGPRRGDRRDDRRDRGGDRGGDRRGP). A compositionally biased stretch (low complexity) spans 291–312 (AAPVASAEPAAEAAPEGEAAAE).

It belongs to the universal ribosomal protein uS2 family.

The polypeptide is Small ribosomal subunit protein uS2 (Myxococcus xanthus (strain DK1622)).